We begin with the raw amino-acid sequence, 428 residues long: 3-phosphoshikimate 1-carboxyvinyltransferase (428 aa).

Residues lysine 23, serine 24, and arginine 28 each coordinate 3-phosphoshikimate. Position 23 (lysine 23) interacts with phosphoenolpyruvate. 2 residues coordinate phosphoenolpyruvate: glycine 97 and arginine 125. Residues serine 170, serine 171, glutamine 172, serine 198, aspartate 314, asparagine 337, and lysine 341 each contribute to the 3-phosphoshikimate site. Phosphoenolpyruvate is bound at residue glutamine 172. Aspartate 314 acts as the Proton acceptor in catalysis. Positions 345, 387, and 412 each coordinate phosphoenolpyruvate.

It belongs to the EPSP synthase family. In terms of assembly, monomer.

The protein resides in the cytoplasm. It catalyses the reaction 3-phosphoshikimate + phosphoenolpyruvate = 5-O-(1-carboxyvinyl)-3-phosphoshikimate + phosphate. It functions in the pathway metabolic intermediate biosynthesis; chorismate biosynthesis; chorismate from D-erythrose 4-phosphate and phosphoenolpyruvate: step 6/7. Catalyzes the transfer of the enolpyruvyl moiety of phosphoenolpyruvate (PEP) to the 5-hydroxyl of shikimate-3-phosphate (S3P) to produce enolpyruvyl shikimate-3-phosphate and inorganic phosphate. The polypeptide is 3-phosphoshikimate 1-carboxyvinyltransferase (Hamiltonella defensa subsp. Acyrthosiphon pisum (strain 5AT)).